Here is a 176-residue protein sequence, read N- to C-terminus: Avian agnoprotein 1a (176 aa).

2 disordered regions span residues Met1 to Glu85 and Val116 to Arg176. A compositionally biased stretch (basic and acidic residues) spans Tyr75–Glu85. A coiled-coil region spans residues Asp76–Ala119. The segment covering Thr137–Ser161 has biased composition (low complexity).

As to quaternary structure, interacts with VP1.

It is found in the virion. Its subcellular location is the host nucleus. The protein is Avian agnoprotein 1a of Budgerigar fledgling disease virus (BFPyV).